Reading from the N-terminus, the 235-residue chain is Large ribosomal subunit protein uL1 (235 aa).

This sequence belongs to the universal ribosomal protein uL1 family. As to quaternary structure, part of the 50S ribosomal subunit.

Functionally, binds directly to 23S rRNA. The L1 stalk is quite mobile in the ribosome, and is involved in E site tRNA release. In terms of biological role, protein L1 is also a translational repressor protein, it controls the translation of the L11 operon by binding to its mRNA. The polypeptide is Large ribosomal subunit protein uL1 (Prochlorococcus marinus (strain MIT 9215)).